Here is a 694-residue protein sequence, read N- to C-terminus: DNA-binding protein RFX2 (694 aa).

Positions 174–249 form a DNA-binding region, RFX-type winged-helix; that stretch reads HLQWLLDNYE…YHYYGIRLKP (76 aa). Disordered stretches follow at residues 268–309 and 659–694; these read QPIH…SQHH and DDVSELGSDNDGDPRISGQPPVKRERVDLNHSMQEM. Polar residues predominate over residues 288 to 299; it reads NTANSSQHTSPE. The span at 300 to 309 shows a compositional bias: low complexity; the sequence is QSVAAQSQHH.

It belongs to the RFX family. In terms of assembly, homodimer. Heterodimer; heterodimerizes with other rfx proteins.

Its subcellular location is the nucleus. The protein resides in the cytoplasm. Its function is as follows. Transcription factor that acts as a key regulator of ciliogenesis. Specifically regulates expression of genes required for cilium assembly and function. Recognizes and binds the X-box, a regulatory motif with DNA sequence 5'-GTNRCC(0-3N)RGYAAC-3' present on promoters. Required for neural tube closure and neural ciliogenesis. The polypeptide is DNA-binding protein RFX2 (rfx2) (Xenopus tropicalis (Western clawed frog)).